The sequence spans 2242 residues: Transcription factor sma-9 (2242 aa).

A coiled-coil region spans residues 120-383 (HQLAQQQAQQ…QQAQQAQLAQ (264 aa)). Residues 317–330 (AAQQAQAQNNASQQ) are compositionally biased toward low complexity. Disordered regions lie at residues 317-344 (AAQQAQAQNNASQQRPSVASTPALSSTP), 494-553 (TPVA…SMSD), 583-617 (GAQSSVDHDSNSGGSTRTSPGPKDSRMLQAASRSQ), 712-754 (LAAH…SSFP), and 1323-1349 (EDSTSAEPSTSGQSLLMRSPRPQSPPL). Residues 331–344 (RPSVASTPALSSTP) are compositionally biased toward polar residues. Composition is skewed to low complexity over residues 494–523 (TPVAVPPMKQNSNPSMNPSSTSTSASATSS) and 539–550 (SSSKAASSGNES). Positions 583–601 (GAQSSVDHDSNSGGSTRTS) are enriched in polar residues. Over residues 1324–1338 (DSTSAEPSTSGQSLL) the composition is skewed to polar residues. 5 C2H2-type zinc fingers span residues 1447–1469 (YICDRCGIRCKKPSMLKKHIKSH), 1475–1499 (FNCTACNFSFKTKGNLTKHLSSKTH), 1700–1722 (LKCDQCDRTFRKISDLTLHQHTH), 1734–1760 (YQCSECKIPIRTKAQLQKHLERNHGVH), and 1790–1814 (FMCVDCDIGFRKHGILAKHLRSKTH). The segment covering 2029 to 2039 (SITSPIVSSST) has biased composition (low complexity). 2 disordered regions span residues 2029 to 2059 (SITSPIVSSSTNFSYRKRSESSLSGSSPTHT) and 2085 to 2107 (STDKAHASESLSDRLHNKRPRPI). Over residues 2085–2099 (STDKAHASESLSDRL) the composition is skewed to basic and acidic residues. C2H2-type zinc fingers lie at residues 2111–2134 (TKCQICADEFSTPIELQVHLHVDH) and 2143–2167 (YKCPRKFCGLNYESLDSLRAHVTAH). Positions 2219–2242 (HELYAQTQQGAGSSTSNQSPKAAN) are disordered. Residues 2223-2242 (AQTQQGAGSSTSNQSPKAAN) show a composition bias toward polar residues.

In terms of tissue distribution, expressed in the ventral nerve cord (VNC), pharynx, intestine and seam cells (at protein level).

The protein resides in the nucleus. Its function is as follows. Transcription factor, probably acting as a transcriptional activator and repressor, involved in the TGF-beta-like dbl-1 signaling pathway. Plays a role in regulation of body size, and patterning of male-specific genital sensilla (simple sense organs), known as rays, and mating-associated structures, spicules. Required for the dorsoventral patterning of the postembryonic mesodermal lineage (M lineage), acting by antagonizing the TGF-beta-like dbl-1 signaling pathway, in part by repressing expression of transcription factor unc-130. Involved in egg-laying, perhaps via modulation of cholinergic neurotransmission. Involved in production of reactive oxygen species (ROS), acting downstream of the dbl-1 signaling pathway. Plays a role in the mitochondrial unfolded protein response (mtUPR). May play a role in modulating lifespan and in responses to proteotoxic stress. Functionally, transcription factor, probably acting as a transcriptional activator. Required for patterning of male-specific genital sensilla (simple sense organs), known as rays. Dispensable for regulation of body size. The chain is Transcription factor sma-9 from Caenorhabditis elegans.